The chain runs to 799 residues: Valine--tRNA ligase (799 aa).

Lysine 536 is an ATP binding site.

This sequence belongs to the class-I aminoacyl-tRNA synthetase family. ValS type 2 subfamily.

It is found in the cytoplasm. It catalyses the reaction tRNA(Val) + L-valine + ATP = L-valyl-tRNA(Val) + AMP + diphosphate. Catalyzes the attachment of valine to tRNA(Val). As ValRS can inadvertently accommodate and process structurally similar amino acids such as threonine, to avoid such errors, it has a 'posttransfer' editing activity that hydrolyzes mischarged Thr-tRNA(Val) in a tRNA-dependent manner. This Pyrobaculum aerophilum (strain ATCC 51768 / DSM 7523 / JCM 9630 / CIP 104966 / NBRC 100827 / IM2) protein is Valine--tRNA ligase (valS).